Consider the following 536-residue polypeptide: Membrane protein insertase YidC (536 aa).

5 helical membrane passes run 7–27 (FFIFAFLFVSFLLWQAWQSQS), 338–358 (LLSTIHNFIGNWGFSIILITF), 419–439 (LPVFIQMPIFLSLYYMLIGSV), 453–473 (LSDQDPYYVLPIFMGLTMFFI), and 494–514 (PFIFTVFFLWFPSGLVLYYIV).

Belongs to the OXA1/ALB3/YidC family. Type 1 subfamily. As to quaternary structure, interacts with the Sec translocase complex via SecD. Specifically interacts with transmembrane segments of nascent integral membrane proteins during membrane integration.

It localises to the cell membrane. Functionally, required for the insertion and/or proper folding and/or complex formation of integral membrane proteins into the membrane. Involved in integration of membrane proteins that insert both dependently and independently of the Sec translocase complex, as well as at least some lipoproteins. Aids folding of multispanning membrane proteins. This chain is Membrane protein insertase YidC, found in Buchnera aphidicola subsp. Schizaphis graminum (strain Sg).